We begin with the raw amino-acid sequence, 126 residues long: Large-conductance mechanosensitive channel (126 aa).

The next 2 membrane-spanning stretches (helical) occupy residues 14–34 and 67–87; these read VIDL…VKSL and GSFL…FILV.

It belongs to the MscL family. As to quaternary structure, homopentamer.

It is found in the cell membrane. Its function is as follows. Channel that opens in response to stretch forces in the membrane lipid bilayer. May participate in the regulation of osmotic pressure changes within the cell. The protein is Large-conductance mechanosensitive channel of Lactiplantibacillus plantarum (strain ATCC BAA-793 / NCIMB 8826 / WCFS1) (Lactobacillus plantarum).